A 514-amino-acid chain; its full sequence is Putative selenium-binding protein (514 aa).

It belongs to the selenium-binding protein family.

In Caenorhabditis briggsae, this protein is Putative selenium-binding protein.